The primary structure comprises 24 residues: Acidic phospholipase A2 4 (24 aa).

This sequence belongs to the phospholipase A2 family. Group II subfamily. Requires Ca(2+) as cofactor. As to expression, expressed by the venom gland.

The protein localises to the secreted. The enzyme catalyses a 1,2-diacyl-sn-glycero-3-phosphocholine + H2O = a 1-acyl-sn-glycero-3-phosphocholine + a fatty acid + H(+). In terms of biological role, PLA2 catalyzes the calcium-dependent hydrolysis of the 2-acyl groups in 3-sn-phosphoglycerides. This Trimeresurus stejnegeri (Chinese green tree viper) protein is Acidic phospholipase A2 4.